A 465-amino-acid chain; its full sequence is MKAFMGDDFLLNSKTAVKLYREYAENMPIIDYHCHLSPKEIYENKTFATITEAWLYGDHYKWRIMRANGIEERCITGNASDEEKFFAWAKTVPMAIGNPLYSWTHLELQRWFGIYDVLNEKTAAAIWKKTNELLQGDGFGARDLILKSNVKVICTTDDPADALTYHELLKESDFPVQVLPGFRPDKGLDISSPGFADWVRSLESASGMAVSSYQSYLDALESRVRFFHNAGGRVSDHALDQMVYAETTEEEAARIFAAGLSGEHVSFEDEKKFKTRTLQYLCGLYAELDWAMQFHINALRNTNTNKFSSLGPDTGYDSINDERIAKPLARLLDSAEKKRQLPKTILYSLNPNDNYIIASMINSFQDGKTPGKIQFGTAWWFNDTKDGMLQQMRALSNMGLFSRFIGMLTDSRSFLSYPRHEYFRRLVCTLIGGWAEQGEAPYDMELLGKIVEGICYRNAEEYFRF.

The protein belongs to the metallo-dependent hydrolases superfamily. Uronate isomerase family.

The enzyme catalyses D-glucuronate = D-fructuronate. It carries out the reaction aldehydo-D-galacturonate = keto-D-tagaturonate. It participates in carbohydrate metabolism; pentose and glucuronate interconversion. This is Uronate isomerase from Bacillus velezensis (strain DSM 23117 / BGSC 10A6 / LMG 26770 / FZB42) (Bacillus amyloliquefaciens subsp. plantarum).